The chain runs to 67 residues: Small ribosomal subunit protein bS21 (67 aa).

It belongs to the bacterial ribosomal protein bS21 family.

The polypeptide is Small ribosomal subunit protein bS21 (rpsU) (Aquifex aeolicus (strain VF5)).